A 152-amino-acid chain; its full sequence is SKP1-like protein 8 (152 aa).

The tract at residues 94–152 (TNAANFLNNKSLLHLAGQTVADMIKGNTPKQMREFFNIENDLTPEEEAAIRRENKWAFE) is interaction with the F-box domain of F-box proteins.

This sequence belongs to the SKP1 family. In terms of assembly, part of a SCF (SKP1-cullin-F-box) protein ligase complex. As to expression, restricted to siliques.

The protein localises to the nucleus. It functions in the pathway protein modification; protein ubiquitination. Its function is as follows. Involved in ubiquitination and subsequent proteasomal degradation of target proteins. Together with CUL1, RBX1 and a F-box protein, it forms a SCF E3 ubiquitin ligase complex. The functional specificity of this complex depends on the type of F-box protein. In the SCF complex, it serves as an adapter that links the F-box protein to CUL1. This is SKP1-like protein 8 (ASK8) from Arabidopsis thaliana (Mouse-ear cress).